Reading from the N-terminus, the 82-residue chain is ATP synthase subunit c (82 aa).

A run of 2 helical transmembrane segments spans residues 6–26 (AAAS…GPGI) and 57–77 (LAFM…LLFA).

It belongs to the ATPase C chain family. As to quaternary structure, F-type ATPases have 2 components, F(1) - the catalytic core - and F(0) - the membrane proton channel. F(1) has five subunits: alpha(3), beta(3), gamma(1), delta(1), epsilon(1). F(0) has four main subunits: a(1), b(1), b'(1) and c(10-14). The alpha and beta chains form an alternating ring which encloses part of the gamma chain. F(1) is attached to F(0) by a central stalk formed by the gamma and epsilon chains, while a peripheral stalk is formed by the delta, b and b' chains.

Its subcellular location is the cell inner membrane. Its function is as follows. F(1)F(0) ATP synthase produces ATP from ADP in the presence of a proton or sodium gradient. F-type ATPases consist of two structural domains, F(1) containing the extramembraneous catalytic core and F(0) containing the membrane proton channel, linked together by a central stalk and a peripheral stalk. During catalysis, ATP synthesis in the catalytic domain of F(1) is coupled via a rotary mechanism of the central stalk subunits to proton translocation. In terms of biological role, key component of the F(0) channel; it plays a direct role in translocation across the membrane. A homomeric c-ring of between 10-14 subunits forms the central stalk rotor element with the F(1) delta and epsilon subunits. In Gloeobacter violaceus (strain ATCC 29082 / PCC 7421), this protein is ATP synthase subunit c.